Consider the following 89-residue polypeptide: Neuropeptide F (89 aa).

Positions 1–29 are cleaved as a signal peptide; that stretch reads MASGTFTQRLLVALMIFALIADLSTLVAA. Phenylalanine 61 is modified (phenylalanine amide). Positions 65-89 are excised as a propeptide; that stretch reads GGYLNPAIFGQDEQEVDWQDSTFSR.

Belongs to the NPY family.

The protein resides in the secreted. Its function is as follows. An integral part of the sensory system that mediates food signaling, providing the neural basis for the regulation of food response; coordinates larval foraging and social behavior changes during development. May have a hormonal role in females. This Anopheles gambiae (African malaria mosquito) protein is Neuropeptide F.